The chain runs to 218 residues: N-(5'-phosphoribosyl)anthranilate isomerase (218 aa).

It belongs to the TrpF family.

The enzyme catalyses N-(5-phospho-beta-D-ribosyl)anthranilate = 1-(2-carboxyphenylamino)-1-deoxy-D-ribulose 5-phosphate. It participates in amino-acid biosynthesis; L-tryptophan biosynthesis; L-tryptophan from chorismate: step 3/5. This is N-(5'-phosphoribosyl)anthranilate isomerase from Acetivibrio thermocellus (strain ATCC 27405 / DSM 1237 / JCM 9322 / NBRC 103400 / NCIMB 10682 / NRRL B-4536 / VPI 7372) (Clostridium thermocellum).